The following is a 304-amino-acid chain: Voltage-dependent anion channel-forming protein YneE (304 aa).

Helical transmembrane passes span 28–48, 50–70, 194–214, and 220–240; these read LLLN…YTHL, IKFT…FLGF, VLAG…TLIL, and LFCI…TPFI.

The protein belongs to the anion channel-forming bestrophin (TC 1.A.46) family.

The protein resides in the cell membrane. The sequence is that of Voltage-dependent anion channel-forming protein YneE (yneE) from Escherichia coli (strain K12).